A 173-amino-acid polypeptide reads, in one-letter code: Dirigent protein 8 (173 aa).

Positions Met1–Gly22 are cleaved as a signal peptide. Asn69, Asn90, and Asn125 each carry an N-linked (GlcNAc...) asparagine glycan.

The protein belongs to the plant dirigent protein family. As to quaternary structure, homodimer.

The protein localises to the secreted. The protein resides in the extracellular space. It is found in the apoplast. Dirigent proteins impart stereoselectivity on the phenoxy radical-coupling reaction, yielding optically active lignans from two molecules of coniferyl alcohol in the biosynthesis of lignans, flavonolignans, and alkaloids and thus plays a central role in plant secondary metabolism. The sequence is that of Dirigent protein 8 (DIR8) from Arabidopsis thaliana (Mouse-ear cress).